A 441-amino-acid polypeptide reads, in one-letter code: Enolase (441 aa).

Gln163 lines the (2R)-2-phosphoglycerate pocket. Glu205 serves as the catalytic Proton donor. Mg(2+)-binding residues include Asp242, Glu288, and Asp315. (2R)-2-phosphoglycerate is bound by residues Lys340, Arg369, Ser370, and Lys391. The Proton acceptor role is filled by Lys340.

It belongs to the enolase family. Mg(2+) is required as a cofactor.

It localises to the cytoplasm. The protein localises to the secreted. Its subcellular location is the cell surface. The catalysed reaction is (2R)-2-phosphoglycerate = phosphoenolpyruvate + H2O. The protein operates within carbohydrate degradation; glycolysis; pyruvate from D-glyceraldehyde 3-phosphate: step 4/5. Catalyzes the reversible conversion of 2-phosphoglycerate (2-PG) into phosphoenolpyruvate (PEP). It is essential for the degradation of carbohydrates via glycolysis. In Ligilactobacillus salivarius (strain UCC118) (Lactobacillus salivarius), this protein is Enolase.